The following is a 203-amino-acid chain: E3 ubiquitin-protein ligase rnf152-A (203 aa).

The segment at 12-55 adopts an RING-type; degenerate zinc-finger fold; it reads CQICFNYYSPRRRPKLLDCKRTCCSVCLQQMRACQKDLRCPWCR. The helical transmembrane segment at 167–187 threads the bilayer; it reads SGICTVILVACVLVFLLGIVL.

It belongs to the RNF152 family.

The protein resides in the lysosome membrane. The enzyme catalyses S-ubiquitinyl-[E2 ubiquitin-conjugating enzyme]-L-cysteine + [acceptor protein]-L-lysine = [E2 ubiquitin-conjugating enzyme]-L-cysteine + N(6)-ubiquitinyl-[acceptor protein]-L-lysine.. The protein operates within protein modification; protein ubiquitination. E3 ubiquitin-protein ligase that acts as a negative regulator of mTORC1 signaling by mediating ubiquitination of RagA/RRAGA and RHEB. Catalyzes 'Lys-63'-linked polyubiquitination of RagA/RRAGA in response to amino acid starvation, thereby regulating mTORC1 signaling. Also mediates monoubiquitination of RHEB, promoting its association with the TSC-TBC complex and subsequent inhibition. Also mediates 'Lys-48'-linked polyubiquitination of target proteins and their subsequent targeting to the proteasome for degradation. In Xenopus laevis (African clawed frog), this protein is E3 ubiquitin-protein ligase rnf152-A.